The following is a 357-amino-acid chain: MALERELLVATQAVRKASLLTKRIQSEVISHKDSTTITKNDNSPVTTGDYAAQTIIINAIKSNFPDDKVVGEESSSGLSDAFVSGILNEIKANDEVYNKNYKKDDFLFTNDQFPLKSLEDVRQIIDFGNYEGGRKGRFWCLDPIDGTKGFLRGEQFAVCLALIVDGVVQLGCIGCPNLVLSSYGAQDLKGHESFGYIFRAVRGLGAFYSPSSDAESWTKIHVRHLKDTKDMITLEGVEKGHSSHDEQTAIKNKLNISKSLHLDSQAKYCLLALGLADVYLRLPIKLSYQEKIWDHAAGNVIVHEAGGIHTDAMEDVPLDFGNGRTLATKGVIASSGPRELHDLVVSTSCDVIQSRNA.

The active-site Proton acceptor is the aspartate 49. Residues glutamate 72, aspartate 142, isoleucine 144, and aspartate 145 each coordinate Mg(2+). The Proton acceptor role is filled by threonine 147. The adenosine 3',5'-bisphosphate site is built by threonine 147, histidine 241, serine 264, lysine 267, arginine 281, and aspartate 294. The AMP site is built by histidine 241, serine 264, lysine 267, arginine 281, and aspartate 294. Aspartate 294 is a Mg(2+) binding site.

The protein belongs to the inositol monophosphatase superfamily. Requires Mg(2+) as cofactor.

Its subcellular location is the cytoplasm. It localises to the nucleus. The enzyme catalyses 3'-phosphoadenylyl sulfate + H2O = adenosine 5'-phosphosulfate + phosphate. It carries out the reaction adenosine 3',5'-bisphosphate + H2O = AMP + phosphate. The catalysed reaction is adenosine 2',5'-bisphosphate + H2O = AMP + phosphate. Phosphatase activity is very sensitive to lithium and moderately sensitive to sodium. The inhibitory effects of lithium and sodium are overcome by high concentrations of potassium. Lithium exerts its inhibitory action by blocking the products of the PAP hydrolysis at the active site. Phosphatase that converts adenosine 3'-phosphate 5'-phosphosulfate (PAPS) to adenosine 5'-phosphosulfate (APS) and 3'(2')-phosphoadenosine 5'-phosphate (PAP) to AMP. May regulate the flux of sulfur in the sulfur-activation pathway by converting PAPS to APS. Involved in salt tolerance. Confers resistance to lithium. Shows no activity on inositol mono- and diphosphates, 3'-AMP, AMP, nicotinamide adenine dinucleotide phosphate (NADP), and p-nitrophenylphosphate. This chain is 3'(2'),5'-bisphosphate nucleotidase (MET22), found in Saccharomyces cerevisiae (strain ATCC 204508 / S288c) (Baker's yeast).